The primary structure comprises 138 residues: Acidic phospholipase A2 CoaPLA2 (138 aa).

A signal peptide spans 1-16 (MRTLWIVAVLLLGVEG). Cystine bridges form between cysteine 42–cysteine 131, cysteine 44–cysteine 60, cysteine 59–cysteine 111, cysteine 65–cysteine 138, cysteine 66–cysteine 104, cysteine 73–cysteine 97, and cysteine 91–cysteine 102. Ca(2+)-binding residues include tyrosine 43, glycine 45, and glycine 47. The active site involves histidine 63. Aspartate 64 provides a ligand contact to Ca(2+). The active site involves aspartate 105.

The protein belongs to the phospholipase A2 family. Group II subfamily. D49 sub-subfamily. In terms of assembly, homodimer. The cofactor is Ca(2+). In terms of tissue distribution, expressed by the venom gland.

The protein resides in the secreted. The catalysed reaction is a 1,2-diacyl-sn-glycero-3-phosphocholine + H2O = a 1-acyl-sn-glycero-3-phosphocholine + a fatty acid + H(+). In terms of biological role, snake venom phospholipase A2 (PLA2) that shows very low inhibition of ADP-induced platelet aggregation in platelet-rich plasma of human, rabbit and guinea pig. Shows edema-inducing activity and myotoxicity. PLA2 catalyzes the calcium-dependent hydrolysis of the 2-acyl groups in 3-sn-phosphoglycerides. The sequence is that of Acidic phospholipase A2 CoaPLA2 from Crotalus lutosus abyssus (Grand Canyon rattlesnake).